The sequence spans 334 residues: Fructose-1,6-bisphosphatase class 1 (334 aa).

Mg(2+)-binding residues include Glu-90, Asp-113, Leu-115, and Asp-116. Substrate is bound by residues Asp-116–Ser-119, Asn-209, Tyr-242, and Lys-272. Glu-278 serves as a coordination point for Mg(2+).

Belongs to the FBPase class 1 family. Homotetramer. Mg(2+) serves as cofactor.

It localises to the cytoplasm. The enzyme catalyses beta-D-fructose 1,6-bisphosphate + H2O = beta-D-fructose 6-phosphate + phosphate. It functions in the pathway carbohydrate biosynthesis; gluconeogenesis. The sequence is that of Fructose-1,6-bisphosphatase class 1 from Haemophilus ducreyi (strain 35000HP / ATCC 700724).